Here is a 467-residue protein sequence, read N- to C-terminus: Receptor-like cytosolic serine/threonine-protein kinase RBK1 (467 aa).

Residues 1–24 (MAVEDNKNSESKNHQEVELHRNDL) show a composition bias toward basic and acidic residues. The interval 1–73 (MAVEDNKNSE…PFSNTTKTVS (73 aa)) is disordered. Over residues 40 to 71 (SDSDNSSSSCSSCSSDDKSSSTSSPFSNTTKT) the composition is skewed to low complexity. Residue threonine 142 is modified to Phosphothreonine. The Protein kinase domain maps to 153–430 (FNPENMIGKG…LRGEDGPAEL (278 aa)). ATP contacts are provided by residues 159 to 167 (IGKGGHAEV) and lysine 181. Aspartate 278 (proton acceptor) is an active-site residue. Serine 282 is subject to Phosphoserine. At threonine 318 the chain carries Phosphothreonine. Tyrosine 326 carries the phosphotyrosine modification.

It belongs to the protein kinase superfamily. Ser/Thr protein kinase family. As to quaternary structure, interacts with ARAC5 and ARAC10. In terms of tissue distribution, mostly expressed in vasculature, hydathode endothem, leaf mesophyll cells and trichomes.

It localises to the cytoplasm. Its subcellular location is the endomembrane system. The protein resides in the nucleus. The catalysed reaction is L-seryl-[protein] + ATP = O-phospho-L-seryl-[protein] + ADP + H(+). The enzyme catalyses L-threonyl-[protein] + ATP = O-phospho-L-threonyl-[protein] + ADP + H(+). This is Receptor-like cytosolic serine/threonine-protein kinase RBK1 (RBK1) from Arabidopsis thaliana (Mouse-ear cress).